A 244-amino-acid chain; its full sequence is HTH-type transcriptional regulator RdgA (244 aa).

The HTH cro/C1-type domain occupies L9 to L62. Positions Q20–V39 form a DNA-binding region, H-T-H motif.

Its function is as follows. Regulates pectin lyase production in response to DNA damage. The chain is HTH-type transcriptional regulator RdgA (rdgA) from Pectobacterium carotovorum subsp. carotovorum (Erwinia carotovora subsp. carotovora).